Here is a 228-residue protein sequence, read N- to C-terminus: Prolactin-2A1 (228 aa).

Positions 1–28 (MQLSVTHPCCRTLILLLVSNLLLWESEA) are cleaved as a signal peptide. Disulfide bonds link C87/C203 and C220/C228.

Belongs to the somatotropin/prolactin family. Expressed specifically in the placenta. Expression restricted to the junctional zone of the chorioallantoic placenta.

Its subcellular location is the secreted. This Mus musculus (Mouse) protein is Prolactin-2A1 (Prl2a1).